The sequence spans 250 residues: Cholesterol ring-cleaving hydrolase IpdB subunit (250 aa).

Belongs to the 3-oxoacid CoA-transferase subunit B family. In terms of assembly, heterotetramer composed of 2 IpdA subunits and 2 IpdB subunits.

The enzyme catalyses (3E)-2-(2-carboxylatoethyl)-3-methyl-6-oxocyclohex-1-ene-1-carboxyl-CoA + H2O = 6-methyl-3,7-dioxodecanedioyl-CoA. It functions in the pathway steroid metabolism; cholesterol degradation. In terms of biological role, involved in the final steps of cholesterol and steroid degradation. Opens the last steroid ring of cholesterol by catalyzing the hydrolysis of (3E)-2-(2-carboxylatoethyl)-3-methyl-6-oxocyclohex-1-ene-1-carboxyl-CoA (COCHEA-CoA) to 6-methyl-3,7-dioxodecanedioyl-CoA (MeDODA-CoA). This is Cholesterol ring-cleaving hydrolase IpdB subunit from Mycobacterium bovis (strain ATCC BAA-935 / AF2122/97).